The following is a 452-amino-acid chain: Cysteine--tRNA ligase (452 aa).

Zn(2+) is bound at residue Cys35. Positions Pro37–Asn47 match the 'HIGH' region motif. The Zn(2+) site is built by Cys215, His240, and Glu244. The 'KMSKS' region motif lies at Lys273–Ser277. Lys276 provides a ligand contact to ATP.

The protein belongs to the class-I aminoacyl-tRNA synthetase family. Monomer. Zn(2+) serves as cofactor.

Its subcellular location is the cytoplasm. The catalysed reaction is tRNA(Cys) + L-cysteine + ATP = L-cysteinyl-tRNA(Cys) + AMP + diphosphate. The polypeptide is Cysteine--tRNA ligase (Gluconobacter oxydans (strain 621H) (Gluconobacter suboxydans)).